The primary structure comprises 412 residues: Allantoate amidohydrolase (412 aa).

4 residues coordinate Zn(2+): histidine 84, aspartate 95, glutamate 130, and histidine 193. Arginine 218, asparagine 278, and arginine 291 together coordinate allantoate. Histidine 385 is a binding site for Zn(2+).

This sequence belongs to the peptidase M20 family. Homodimer. It depends on Zn(2+) as a cofactor.

Its subcellular location is the cytoplasm. It carries out the reaction allantoate + H2O + 2 H(+) = (S)-2-ureidoglycine + NH4(+) + CO2. It functions in the pathway nitrogen metabolism; (S)-allantoin degradation. In terms of biological role, involved in the anaerobic nitrogen utilization via the assimilation of allantoin. Catalyzes specifically the hydrolysis of allantoate to yield CO2, NH3 and S-ureidoglycine, which is unstable and readily undergoes a second deamination by S-ureidoglycine aminohydrolase AllE to yield S-ureidoglycolate and NH3. In Bacillus subtilis (strain 168), this protein is Allantoate amidohydrolase.